We begin with the raw amino-acid sequence, 257 residues long: Phosphate import ATP-binding protein PstB (257 aa).

Residues 4–252 (LKLNDVNIYY…PDNKETEDYI (249 aa)) form the ABC transporter domain. Position 36-43 (36-43 (GPSGCGKS)) interacts with ATP.

It belongs to the ABC transporter superfamily. Phosphate importer (TC 3.A.1.7) family. The complex is composed of two ATP-binding proteins (PstB), two transmembrane proteins (PstC and PstA) and a solute-binding protein (PstS).

The protein localises to the cell membrane. It catalyses the reaction phosphate(out) + ATP + H2O = ADP + 2 phosphate(in) + H(+). Part of the ABC transporter complex PstSACB involved in phosphate import. Responsible for energy coupling to the transport system. In Corynebacterium efficiens (strain DSM 44549 / YS-314 / AJ 12310 / JCM 11189 / NBRC 100395), this protein is Phosphate import ATP-binding protein PstB.